A 427-amino-acid chain; its full sequence is A-kinase anchor protein 5 (427 aa).

The interval 1–122 (METTISEIHV…DADLSKKKAK (122 aa)) is disordered. The interval 1–170 (METTISEIHV…LDIQTQTPLN (170 aa)) is essential to the intracellular anchoring function. Residues 8-19 (IHVENKDEKRSA) show a composition bias toward basic and acidic residues. Residue Ser22 is modified to Phosphoserine. A lipid anchor (S-palmitoyl cysteine) is attached at Cys36. A compositionally biased stretch (basic residues) spans 37 to 48 (FKRRKKAAKALK). The short motif at 76–96 (RGAWASLKRLVTRRKRSESSK) is the AKAP CaM-binding element. Residues 92 to 102 (SESSKQQKPLE) show a composition bias toward basic and acidic residues. The S-palmitoyl cysteine moiety is linked to residue Cys129. 2 stretches are compositionally biased toward polar residues: residues 171–182 (DQATKAKSTQDL) and 242–252 (VQPQQASPLET). Disordered stretches follow at residues 171-205 (DQAT…STTS), 239-269 (KQDV…PPLP), and 281-333 (SNST…EESK). Positions 302–333 (EETKPKDTELSQESDFKENGITEEKSKSEESK) are enriched in basic and acidic residues. The tract at residues 392–405 (LIETASSLVKNAIQ) is PKA-RII subunit binding domain. The tethers NFATC2 to CRAC channels stretch occupies residues 410-427 (QLVNEMASDDNKINNLLQ).

In terms of assembly, binding protein for dimer of the RII-beta regulatory subunit of cAMP-dependent protein kinase (PKA) and also for the protein kinase C (PKC) and the phosphatase calcineurin (PP2B). Each enzyme is inhibited when bound to the anchoring protein. Also binds the beta2-adrenergic receptor. Part of a complex containing AKAP5, ADCY5, ADCY6 and PDE4C. Interacts with ADCY8, and enhances its phosphorylation at lipid rafts. Interacts with ORAI1 (isoform alpha) (via N-terminus) upon store depletion and in response to LTC4. Does not interact with ORAI2 and ORAI3 paralogs. Interacts (via leucine zipper domain) with NFATC2/NFAT1. Interacts with calmodulin; the interaction is calcium-independent. Interacts with KCNQ2; the interaction may help KCNQ2 channel complex to retain calcium-bound calmodulin. Interacts with KCNK2; the channel is recruited to postsynaptic microdomains by AKAP5 where it can integrate neurotransmitter receptor signals. Part of a complex composed of AKAP5 and ADRB2. Post-translationally, palmitoylated. Palmitoylation at Cys-36 and Cys-129 play a key role in the targeting of AKAP5 to lipid rafts. Palmitoylation by ZDHHC2 is required for AKAP5 function in LTP-stimulated recycling endosome exocytosis. Predominantly in the cerebral cortex and the postsynaptic densities of the forebrain, and to a lesser extent in adrenal medulla, lung and anterior pituitary.

It localises to the postsynaptic recycling endosome membrane. The protein localises to the cell projection. It is found in the dendrite. Its subcellular location is the postsynaptic cell membrane. Its function is as follows. Multivalent scaffold protein that anchors the cAMP-dependent protein kinase/PKA to cytoskeletal and/or organelle-associated proteins, targeting the signal carried by cAMP to specific intracellular effectors. Association with the beta2-adrenergic receptor (beta2-AR) not only regulates beta2-AR signaling pathway, but also the activation by PKA by switching off the beta2-AR signaling cascade. Plays a role in long term synaptic potentiation by regulating protein trafficking from the dendritic recycling endosomes to the plasma membrane and controlling both structural and functional plasticity at excitatory synapses. In hippocampal pyramidal neurons, recruits KCNK2/TREK-1 channel at postsynaptic dense bodies microdomains and converts it to a leak channel no longer sensitive to stimulation by arachidonic acid, acidic pH or mechanical stress, nor inhibited by Gq-coupled receptors but still under the negative control of Gs-coupled receptors. Associates with ORAI1 pore-forming subunit of CRAC channels in Ca(2+) signaling microdomains where it recruits NFATC2/NFAT1 and couples store-operated Ca(2+) influx to calmodulin and calcineurin signaling and activation of NFAT-dependent transcriptional responses. This chain is A-kinase anchor protein 5 (AKAP5), found in Homo sapiens (Human).